Reading from the N-terminus, the 403-residue chain is Argininosuccinate synthase (403 aa).

ATP contacts are provided by residues 10 to 18 (AYSGGVDTS) and Ala-38. Tyr-89 is an L-citrulline binding site. ATP is bound at residue Gly-119. L-aspartate-binding residues include Thr-121, Asn-125, and Asp-126. Residue Asn-125 participates in L-citrulline binding. Residues Arg-129, Ser-177, Ser-186, Glu-262, and Tyr-274 each coordinate L-citrulline.

It belongs to the argininosuccinate synthase family. Type 1 subfamily. Homotetramer.

It is found in the cytoplasm. The catalysed reaction is L-citrulline + L-aspartate + ATP = 2-(N(omega)-L-arginino)succinate + AMP + diphosphate + H(+). It functions in the pathway amino-acid biosynthesis; L-arginine biosynthesis; L-arginine from L-ornithine and carbamoyl phosphate: step 2/3. The chain is Argininosuccinate synthase from Synechococcus sp. (strain CC9605).